The following is an 83-amino-acid chain: Cytochrome b559 subunit alpha (83 aa).

The chain crosses the membrane as a helical span at residues 21–35 (VIHSITIPSLFIAGW). Residue His23 participates in heme binding.

The protein belongs to the PsbE/PsbF family. In terms of assembly, heterodimer of an alpha subunit and a beta subunit. PSII is composed of 1 copy each of membrane proteins PsbA, PsbB, PsbC, PsbD, PsbE, PsbF, PsbH, PsbI, PsbJ, PsbK, PsbL, PsbM, PsbT, PsbX, PsbY, PsbZ, Psb30/Ycf12, at least 3 peripheral proteins of the oxygen-evolving complex and a large number of cofactors. It forms dimeric complexes. It depends on heme b as a cofactor.

The protein resides in the plastid. It is found in the chloroplast thylakoid membrane. This b-type cytochrome is tightly associated with the reaction center of photosystem II (PSII). PSII is a light-driven water:plastoquinone oxidoreductase that uses light energy to abstract electrons from H(2)O, generating O(2) and a proton gradient subsequently used for ATP formation. It consists of a core antenna complex that captures photons, and an electron transfer chain that converts photonic excitation into a charge separation. The polypeptide is Cytochrome b559 subunit alpha (Citrus sinensis (Sweet orange)).